We begin with the raw amino-acid sequence, 646 residues long: Cell surface glycoprotein MUC18 (646 aa).

Residues 1–23 form the signal peptide; it reads MGLPRLVCAFLLAACCCCPRVAG. 2 Ig-like V-type domains span residues 24–129 and 139–242; these read VPGE…YRIQ and PNIQ…REVT. The Extracellular portion of the chain corresponds to 24-559; that stretch reads VPGEAEQPAP…RKLPEPESRG (536 aa). 4 cysteine pairs are disulfide-bonded: Cys48–Cys116, Cys161–Cys223, Cys272–Cys320, and Cys365–Cys407. Asn56 is a glycosylation site (N-linked (GlcNAc...) asparagine). 3 consecutive Ig-like C2-type domains span residues 244 to 330, 335 to 424, and 430 to 510; these read PVFY…TMIS, PQEL…QLVN, and PPWM…KNTS. Residues 278-299 form a disordered region; the sequence is PPPHFSISKQNPSTREAEEETT. Residues Asn418, Asn449, Asn467, Asn508, Asn518, Asn527, and Asn544 are each glycosylated (N-linked (GlcNAc...) asparagine). Cys452 and Cys499 form a disulfide bridge. The segment at 525-554 is disordered; it reads DSNTTTGLSTSTASPHTRANSTSTERKLPE. Residues 533 to 547 show a composition bias toward polar residues; that stretch reads STSTASPHTRANSTS. The helical transmembrane segment at 560–583 threads the bilayer; that stretch reads VVIVAVIVCILVLAVLGAVLYFLY. Over 584–646 the chain is Cytoplasmic; it reads KKGKLPCRRS…QGEKYIDLRH (63 aa). Phosphoserine is present on residues Ser606, Ser614, and Ser628. Residues 620 to 646 form a disordered region; it reads EMGLLQGSSGDKRAPGDQGEKYIDLRH. Residues 629-646 are compositionally biased toward basic and acidic residues; sequence GDKRAPGDQGEKYIDLRH.

As to expression, detected in endothelial cells in vascular tissue throughout the body. May appear at the surface of neural crest cells during their embryonic migration. Appears to be limited to vascular smooth muscle in normal adult tissues. Associated with tumor progression and the development of metastasis in human malignant melanoma. Expressed most strongly on metastatic lesions and advanced primary tumors and is only rarely detected in benign melanocytic nevi and thin primary melanomas with a low probability of metastasis.

The protein resides in the membrane. Plays a role in cell adhesion, and in cohesion of the endothelial monolayer at intercellular junctions in vascular tissue. Its expression may allow melanoma cells to interact with cellular elements of the vascular system, thereby enhancing hematogeneous tumor spread. Could be an adhesion molecule active in neural crest cells during embryonic development. Acts as a surface receptor that triggers tyrosine phosphorylation of FYN and PTK2/FAK1, and a transient increase in the intracellular calcium concentration. The sequence is that of Cell surface glycoprotein MUC18 (MCAM) from Homo sapiens (Human).